Consider the following 504-residue polypeptide: DnaJ homolog subfamily C member 3 (504 aa).

A signal peptide spans 1-31; that stretch reads MVAPGSVTSRLGSVFPFLLVLVDLQYEGAEC. TPR repeat units follow at residues 37-70, 72-104, 105-138, 154-187, 189-221, 222-255, 268-301, 306-339, and 340-373; these read VEKHLELGKKLLAAGQLADALSQFHAAVDGDPDN, IAYYRRATVFLAMGKSKAALPDLTKVIQLKMDF, TAARLQRGHLLLKQGKLDEAEDDFKKVLKSNPSE, MQRLRSQALNAFGSGDYTAAIAFLDKILEVCVWD, ELRELRAECFIKEGEPRKAISDLKAASKLKNDN, TEAFYKISTLYYQLGDHELSLSEVRECLKLDQDH, LNKLIESAEELIRDGRYTDATSKYESVMKTEPSI, VRSKERICHCFSKDEKPVEAIRVCSEVLQMEPDN, and VNALKDRAEAYLIEEMYDEAIQDYETAQEHNEND. A disulfide bridge connects residues Cys-248 and Cys-258. Ser-274 carries the phosphoserine; by FAM20C modification. An intrachain disulfide couples Cys-313 to Cys-329. Residues 375–393 are flexible linker; sequence QIREGLEKAQRLLKQSQKR. The region spanning 394-462 is the J domain; sequence DYYKILGVKR…EMRKKFDDGE (69 aa). Residues 451 to 481 are disordered; it reads DPEMRKKFDDGEDPLDAESQQGGGGNPFHRS.

In terms of assembly, interacts with EIF2AK4/GCN2; this interaction occurs under endoplasmic reticulum (ER) stress, hypothermic and amino acid starving stress conditions and inhibits EIF2AK4/GCN2 kinase activity. Interacts with EIF2AK3. Interacts with EIF2AK2. Forms a trimeric complex with DNAJB1 and HSPA8. Interacts with THAP12. Widely expressed with high level in the pancreas and testis. Also expressed in cell lines with different levels.

It is found in the endoplasmic reticulum. Functionally, involved in the unfolded protein response (UPR) during endoplasmic reticulum (ER) stress. Acts as a negative regulator of the EIF2AK4/GCN2 kinase activity by preventing the phosphorylation of eIF-2-alpha at 'Ser-52' and hence attenuating general protein synthesis under ER stress, hypothermic and amino acid starving stress conditions. Co-chaperone of HSPA8/HSC70, it stimulates its ATPase activity. May inhibit both the autophosphorylation of EIF2AK2/PKR and the ability of EIF2AK2 to catalyze phosphorylation of the EIF2A. May inhibit EIF2AK3/PERK activity. This is DnaJ homolog subfamily C member 3 (DNAJC3) from Homo sapiens (Human).